The following is a 246-amino-acid chain: Aquaporin AqpM (246 aa).

Residues 1-11 (MVSLTKRCIAE) are Cytoplasmic-facing. The helical transmembrane segment at 12–32 (FIGTFFLVFFGAGAAAITLMI) threads the bilayer. Residues 33-45 (ASGGTAPNPFNIG) lie on the Extracellular side of the membrane. A helical membrane pass occupies residues 46-66 (IGLLGGLGDWVAIGLAFGFAI). The Cytoplasmic segment spans residues 67 to 69 (AAS). The chain crosses the membrane as a helical span at residues 70–90 (IYALGNISGCHINPAVTIGLW). Positions 82–84 (NPA) match the NPA 1 motif. At 91 to 103 (SVKKFPGRDVVPY) the chain is on the extracellular side. The helical transmembrane segment at 104–124 (IIAQLLGAAFASFIFLQCAGI) threads the bilayer. Over 125–145 (TAATIGGLGATAPFPGIGYWQ) the chain is Cytoplasmic. The chain crosses the membrane as a helical span at residues 146 to 166 (AMLAETVGTFLLMITIMGIAV). Over 167–172 (DERAPK) the chain is Extracellular. The helical transmembrane segment at 173 to 193 (GFAGIIIGLTVAGIITTIGNI) threads the bilayer. At 194–217 (TGSSLNPARTFGPYLNDMVFAGTN) the chain is on the cytoplasmic side. The NPA 2 motif lies at 199–201 (NPA). Residues 218 to 238 (LWNYFPIYVIGPVVGAVLAAL) traverse the membrane as a helical segment. At 239 to 246 (TYQYLTSE) the chain is on the extracellular side.

The protein belongs to the MIP/aquaporin (TC 1.A.8) family. In terms of assembly, homotetramer.

It localises to the cell membrane. Functionally, channel that permits osmotically driven movement of water in both directions. It mediates rapid entry or exit of water in response to abrupt changes in osmolarity. Also exhibits a transient but reproducible increase in the initial glycerol flux. The sequence is that of Aquaporin AqpM (aqpM) from Methanothermobacter thermautotrophicus (strain ATCC 29096 / DSM 1053 / JCM 10044 / NBRC 100330 / Delta H) (Methanobacterium thermoautotrophicum).